We begin with the raw amino-acid sequence, 55 residues long: uncharacterized protein (55 aa).

The chain crosses the membrane as a helical span at residues 7–24 (VALVGAVLATLTACTGHI).

The protein localises to the membrane. This is an uncharacterized protein from Escherichia coli O157:H7.